The sequence spans 204 residues: Holliday junction branch migration complex subunit RuvA (204 aa).

The tract at residues 1-64 is domain I; the sequence is MFAFLRGELV…EDLQQLFGFL (64 aa). The segment at 65–143 is domain II; the sequence is DEEELQLFRL…KIQPTSSAKA (79 aa). The tract at residues 144-151 is flexible linker; that stretch reads GAPSAVLS. The tract at residues 151–204 is domain III; sequence SATQLIDDAVAALTTLGFPKASAQKAVSKVLETTPGLSVEELVRTSLAAMHNNL.

It belongs to the RuvA family. In terms of assembly, homotetramer. Forms an RuvA(8)-RuvB(12)-Holliday junction (HJ) complex. HJ DNA is sandwiched between 2 RuvA tetramers; dsDNA enters through RuvA and exits via RuvB. An RuvB hexamer assembles on each DNA strand where it exits the tetramer. Each RuvB hexamer is contacted by two RuvA subunits (via domain III) on 2 adjacent RuvB subunits; this complex drives branch migration. In the full resolvosome a probable DNA-RuvA(4)-RuvB(12)-RuvC(2) complex forms which resolves the HJ.

The protein resides in the cytoplasm. Its function is as follows. The RuvA-RuvB-RuvC complex processes Holliday junction (HJ) DNA during genetic recombination and DNA repair, while the RuvA-RuvB complex plays an important role in the rescue of blocked DNA replication forks via replication fork reversal (RFR). RuvA specifically binds to HJ cruciform DNA, conferring on it an open structure. The RuvB hexamer acts as an ATP-dependent pump, pulling dsDNA into and through the RuvAB complex. HJ branch migration allows RuvC to scan DNA until it finds its consensus sequence, where it cleaves and resolves the cruciform DNA. This is Holliday junction branch migration complex subunit RuvA from Chlorobaculum parvum (strain DSM 263 / NCIMB 8327) (Chlorobium vibrioforme subsp. thiosulfatophilum).